The sequence spans 840 residues: Anaphase-promoting complex subunit CDC16 (840 aa).

Disordered stretches follow at residues 67-97 (AARTQQSLPTDAQNDRLQQPWNRTNTATSPY) and 173-212 (GVVRDEDNDEDVHNNGDAAANANNDRESKLGHNGPLTTTT). TPR repeat units follow at residues 229-260 (AIERLRLWRFDALMQHMYRTAEYIADKVYNIS), 263-288 (PDDAFWLGQVYYNNNQYVRAVELITR), and 296-319 (ILCRYLLGLSFVKLQRFDDALDVI). Positions 329–350 (PSTTAANTMSNNGNNSNTSQPV) are disordered. The segment covering 330 to 347 (STTAANTMSNNGNNSNTS) has biased composition (low complexity). TPR repeat units follow at residues 357-388 (MESSLCFLRGKIYFAQNNFNKARDAFREAILV), 393-416 (FEAFEMLLSKNLLTPQEEWDLFDS), 426-454 (KEIMKNLYKINLSKYINTEDITKSNEILA), 464-492 (DVVRSKVDICYTQCKFNECLELCETVLEN), 499-526 (ILPAYIGCLYELSNKNKLFLLSHRLAET), 531-560 (AITWFSVATYYMSLDRISEAQKYYSKSSIL), 565-593 (AAAWLGFAHTYALEGEQDQALTAYSTASR), 600-628 (LPKLFLGMQFMAMNSLNLAESYFVLAYDI), 633-665 (PLVLNEMGVMYFKKNEFVKAKKYLKKALEVVKD), 671-703 (RTTISIQLNLGHTYRKLNENEIAIKCFRCVLEK), and 708-737 (SEIHCSLGYLYLKTKKLQKAIDHLHKSLYL). The disordered stretch occupies residues 802 to 840 (RTQKEIFDQNNKALRKGGHDSKTGSNNADDDFDADMELE). Positions 829–840 (ADDDFDADMELE) are enriched in acidic residues.

The protein belongs to the APC6/CDC16 family. In terms of assembly, the APC/C is composed of at least 13 subunits that stay tightly associated throughout the cell cycle: APC1, APC2, APC4, APC5, APC9, APC11, CDC16, CDC23, CDC26, CDC27, DOC1, MND2 and SWM1. Interacts with AMA1. In terms of processing, phosphorylated by CDC28, which is required for the early mitotic activity of the APC/C in its CDC20-bound form.

It is found in the nucleus. Its pathway is protein modification; protein ubiquitination. In terms of biological role, component of the anaphase promoting complex/cyclosome (APC/C), a cell cycle-regulated E3 ubiquitin-protein ligase complex that controls progression through mitosis and the G1 phase of the cell cycle. The APC/C is thought to confer substrate specificity and, in the presence of ubiquitin-conjugating E2 enzymes, it catalyzes the formation of protein-ubiquitin conjugates that are subsequently degraded by the 26S proteasome. In early mitosis, the APC/C is activated by CDC20 and targets securin PDS1, the B-type cyclin CLB5, and other anaphase inhibitory proteins for proteolysis, thereby triggering the separation of sister chromatids at the metaphase-to-anaphase transition. In late mitosis and in G1, degradation of CLB5 allows activation of the APC/C by CDH1, which is needed to destroy CDC20 and the B-type cyclin CLB2 to allow exit from mitosis and creating the low CDK state necessary for cytokinesis and for reforming prereplicative complexes in G1 prior to another round of replication. This chain is Anaphase-promoting complex subunit CDC16 (CDC16), found in Saccharomyces cerevisiae (strain ATCC 204508 / S288c) (Baker's yeast).